The primary structure comprises 109 residues: Thiosulfate sulfurtransferase GlpE (109 aa).

Positions 16–104 constitute a Rhodanese domain; that stretch reads REQGAVVVDI…WRSTYPAETA (89 aa). The active-site Cysteine persulfide intermediate is the Cys-64.

It belongs to the GlpE family.

The protein localises to the cytoplasm. It carries out the reaction thiosulfate + hydrogen cyanide = thiocyanate + sulfite + 2 H(+). The enzyme catalyses thiosulfate + [thioredoxin]-dithiol = [thioredoxin]-disulfide + hydrogen sulfide + sulfite + 2 H(+). Transferase that catalyzes the transfer of sulfur from thiosulfate to thiophilic acceptors such as cyanide or dithiols. May function in a CysM-independent thiosulfate assimilation pathway by catalyzing the conversion of thiosulfate to sulfite, which can then be used for L-cysteine biosynthesis. This Pseudomonas fluorescens (strain ATCC BAA-477 / NRRL B-23932 / Pf-5) protein is Thiosulfate sulfurtransferase GlpE.